We begin with the raw amino-acid sequence, 65 residues long: Large ribosomal subunit protein bL32 (65 aa).

The segment covering 1–19 (MAIVPKRKTSKQRKHKRQS) has biased composition (basic residues). Residues 1-21 (MAIVPKRKTSKQRKHKRQSHS) are disordered.

The protein belongs to the bacterial ribosomal protein bL32 family.

The sequence is that of Large ribosomal subunit protein bL32 from Mesomycoplasma hyopneumoniae (strain 7448) (Mycoplasma hyopneumoniae).